A 246-amino-acid polypeptide reads, in one-letter code: Exosome complex component SKI6 (246 aa).

Belongs to the RNase PH family. In terms of assembly, component of the RNA exosome complex. Specifically part of the catalytically inactive RNA exosome core complex (Exo-9) which may associate with the catalytic subunits RRP6 and DIS3 in cytoplasmic- and nuclear-specific RNA exosome complex forms. Exo-9 is formed by a hexameric base ring of RNase PH domain-containing subunits and a cap ring consisting of CSL4, RRP4 and RRP40.

Its subcellular location is the cytoplasm. It localises to the nucleus. The protein resides in the nucleolus. In terms of biological role, non-catalytic component of the RNA exosome complex which has 3'-&gt;5' exoribonuclease activity and participates in a multitude of cellular RNA processing and degradation events. In the nucleus, the RNA exosome complex is involved in proper maturation of stable RNA species such as rRNA, snRNA and snoRNA, in the elimination of RNA processing by-products and non-coding 'pervasive' transcripts, such as antisense RNA species and cryptic unstable transcripts (CUTs), and of mRNAs with processing defects, thereby limiting or excluding their export to the cytoplasm. In the cytoplasm, the RNA exosome complex is involved in general mRNA turnover and in RNA surveillance pathways, preventing translation of aberrant mRNAs. The catalytic inactive RNA exosome core complex of 9 subunits (Exo-9) is proposed to play a pivotal role in the binding and presentation of RNA for ribonucleolysis, and to serve as a scaffold for the association with catalytic subunits and accessory proteins or complexes. SKI6 is part of the hexameric ring of RNase PH domain-containing subunits proposed to form a central channel which threads RNA substrates for degradation. The chain is Exosome complex component SKI6 (SKI6) from Saccharomyces cerevisiae (strain ATCC 204508 / S288c) (Baker's yeast).